Reading from the N-terminus, the 35-residue chain is Coenzyme PQQ synthesis protein A (35 aa).

Positions 16-20 (EINMY) form a cross-link, pyrroloquinoline quinone (Glu-Tyr).

This sequence belongs to the PqqA family.

It participates in cofactor biosynthesis; pyrroloquinoline quinone biosynthesis. Its function is as follows. Required for coenzyme pyrroloquinoline quinone (PQQ) biosynthesis. PQQ is probably formed by cross-linking a specific glutamate to a specific tyrosine residue and excising these residues from the peptide. This is Coenzyme PQQ synthesis protein A from Roseobacter denitrificans (strain ATCC 33942 / OCh 114) (Erythrobacter sp. (strain OCh 114)).